The following is a 346-amino-acid chain: L-threonine dehydratase catabolic TdcB (346 aa).

Residue 59–60 (FT) coordinates AMP. Lys-64 is modified (N6-(pyridoxal phosphate)lysine). AMP is bound by residues Gln-94, 125–126 (GY), and Asn-321.

Belongs to the serine/threonine dehydratase family. As to quaternary structure, in the native structure, TdcB is in a dimeric form, whereas in the TdcB-AMP complex, it exists in a tetrameric form (dimer of dimers). The cofactor is pyridoxal 5'-phosphate.

The catalysed reaction is L-threonine = 2-oxobutanoate + NH4(+). Its pathway is amino-acid degradation; L-threonine degradation via propanoate pathway; propanoate from L-threonine: step 1/4. Each protein molecule can bind up to four molecules of AMP, which act as an allosteric activator to the enzyme. Functionally, catalyzes the anaerobic formation of alpha-ketobutyrate and ammonia from threonine in a two-step reaction. The first step involved a dehydration of threonine and a production of enamine intermediates (aminocrotonate), which tautomerizes to its imine form (iminobutyrate). Both intermediates are unstable and short-lived. The second step is the nonenzymatic hydrolysis of the enamine/imine intermediates to form 2-ketobutyrate and free ammonia. In the low water environment of the cell, the second step is accelerated by RidA. The protein is L-threonine dehydratase catabolic TdcB (tdcB) of Staphylococcus aureus (strain Mu50 / ATCC 700699).